Here is a 407-residue protein sequence, read N- to C-terminus: Frizzled/smoothened-like sans CRD protein J (407 aa).

An N-terminal signal peptide occupies residues 1 to 23; it reads MKFLFSVILVIISFLGISKIVNG. The Extracellular segment spans residues 24–89; it reads QIACPSPFLY…WNSFNKLVKQ (66 aa). Asparagine 37 carries N-linked (GlcNAc...) asparagine glycosylation. The helical transmembrane segment at 90 to 110 threads the bilayer; sequence MGAVAFTCSAIIMIIYGPLMN. Residues 111–120 are Cytoplasmic-facing; the sequence is RSFFKFDRHT. A helical membrane pass occupies residues 121-141; that stretch reads ITVFCFALSTFFIGVSDLMFA. The Extracellular segment spans residues 142–169; that stretch reads TNDVDMVCPESHRYARQTDKTCATNGVL. Residues 170–190 form a helical membrane-spanning segment; the sequence is FQFGWLGSVMWFAFLSIDGFF. At 191-199 the chain is on the cytoplasmic side; the sequence is RASGKKMNK. A helical transmembrane segment spans residues 200–220; the sequence is IAFAIVLASIWILNIVLSFAP. Residues 221–246 lie on the Extracellular side of the membrane; that stretch reads MGGDQYGAYFVGQVNCWILVKNWQYA. A helical transmembrane segment spans residues 247–267; it reads FFWAELIVSLAIGFVGICLTI. Residues 268-285 lie on the Cytoplasmic side of the membrane; that stretch reads YSLIRKTSDGNTLKHVTP. Residues 286 to 306 traverse the membrane as a helical segment; the sequence is LILVFLLFCQYLYMIIFYGII. Topologically, residues 307–354 are extracellular; it reads NEKKDHYQNILAEQVGCIFNNALAKMKVPGIVYAGECTFNETITFSSQ. Asparagine 346 carries an N-linked (GlcNAc...) asparagine glycan. The helical transmembrane segment at 355 to 375 threads the bilayer; the sequence is YAFLFFVRLLGIEIFAFYLFS. At 376–407 the chain is on the cytoplasmic side; sequence KETLLLIKSSYIATMFGLGDKDAYDVELEETD.

This sequence belongs to the G-protein coupled receptor Fz/Smo family.

The protein localises to the membrane. This is Frizzled/smoothened-like sans CRD protein J (fscJ) from Dictyostelium discoideum (Social amoeba).